Consider the following 78-residue polypeptide: Putative membrane protein insertion efficiency factor (78 aa).

This sequence belongs to the UPF0161 family.

The protein resides in the cell inner membrane. In terms of biological role, could be involved in insertion of integral membrane proteins into the membrane. In Thiobacillus denitrificans (strain ATCC 25259 / T1), this protein is Putative membrane protein insertion efficiency factor.